The sequence spans 73 residues: Mu-conotoxin PIIIA (73 aa).

Positions 1-19 (MSKLGVLLTICLLLFPITA) are cleaved as a signal peptide. Positions 20-49 (LPMDGDQPADRLAERMQDNISSEEHPFEKR) are excised as a propeptide. Position 50 is a pyrrolidone carboxylic acid (Gln-50). 6 cysteine pairs are disulfide-bonded: Cys-53–Cys-65, Cys-53–Cys-70, Cys-54–Cys-70, Cys-54–Cys-71, Cys-60–Cys-65, and Cys-60–Cys-71. The residue at position 57 (Pro-57) is a 4-hydroxyproline. Pro-67 carries the 4-hydroxyproline modification. The residue at position 71 (Cys-71) is a Cysteine amide.

It belongs to the conotoxin M superfamily. In terms of processing, 3D-structure of 3 disulfide-bond connectivities isomers is described (PIIIA-1 (C1-C5, C2-C6, C3-C4), PIIIA-2 (C1-C4, C2-C5, C3-C6) and PIIIA-3 (C1-C2, C3-C4, C5-C6)). Only PIIIA-2 contains the cysteine connectivity described as typical for native mu-conotoxins. However, PIIIA-1 is more potent than PIIIA-2, suggesting another possible disulfid connectivity. For this reason, both connectivities have been indicated in features. In terms of tissue distribution, expressed by the venom duct.

It is found in the secreted. Functionally, mu-conotoxins block voltage-gated sodium channels (Nav). This toxin potently blocks rNav1.4/SCN4A (IC(50)=36-41 nM). It also moderately blocks rNav1.1/SCN1A (IC(50)=120 nM), rNav1.2/SCN2A (IC(50)=620 nM), rNav1.3/SCN3A (IC(50)=3.2 uM), mNav1.6/SCN8A (IC(50)=100 nM). This inhibition is reversible. The block of Nav1.1, Nav1.2, and Nav1.6 is modified when beta-subunits are coexpressed with alpha subunits. Hence, blocks of channels containing the beta-1 and beta-3 subunits are more potent (compared to channels without beta subunits), whereas blocks of channels containing the beta-2 and beta-4 are less potent (compared to channels without beta subunits). In vivo, this peptide causes flaccid paralysis in both mice and fish. This is Mu-conotoxin PIIIA from Conus purpurascens (Purple cone).